The primary structure comprises 398 residues: Dual-specificity RNA methyltransferase RlmN (398 aa).

Glutamate 119 functions as the Proton acceptor in the catalytic mechanism. The region spanning 125–364 is the Radical SAM core domain; the sequence is EADRATLCVS…TIVRKTRGDD (240 aa). The cysteines at positions 132 and 369 are disulfide-linked. [4Fe-4S] cluster-binding residues include cysteine 139, cysteine 143, and cysteine 146. S-adenosyl-L-methionine contacts are provided by residues 193-194, serine 225, 247-249, and asparagine 326; these read GE and SLH. The S-methylcysteine intermediate role is filled by cysteine 369.

Belongs to the radical SAM superfamily. RlmN family. [4Fe-4S] cluster serves as cofactor.

The protein resides in the cytoplasm. It carries out the reaction adenosine(2503) in 23S rRNA + 2 reduced [2Fe-2S]-[ferredoxin] + 2 S-adenosyl-L-methionine = 2-methyladenosine(2503) in 23S rRNA + 5'-deoxyadenosine + L-methionine + 2 oxidized [2Fe-2S]-[ferredoxin] + S-adenosyl-L-homocysteine. The enzyme catalyses adenosine(37) in tRNA + 2 reduced [2Fe-2S]-[ferredoxin] + 2 S-adenosyl-L-methionine = 2-methyladenosine(37) in tRNA + 5'-deoxyadenosine + L-methionine + 2 oxidized [2Fe-2S]-[ferredoxin] + S-adenosyl-L-homocysteine. Its function is as follows. Specifically methylates position 2 of adenine 2503 in 23S rRNA and position 2 of adenine 37 in tRNAs. m2A2503 modification seems to play a crucial role in the proofreading step occurring at the peptidyl transferase center and thus would serve to optimize ribosomal fidelity. In Yersinia pseudotuberculosis serotype O:3 (strain YPIII), this protein is Dual-specificity RNA methyltransferase RlmN.